The chain runs to 327 residues: Undecaprenyl-phosphate 4-deoxy-4-formamido-L-arabinose transferase (327 aa).

The Cytoplasmic portion of the chain corresponds to 1–235; that stretch reads MFDAAPIKKV…TCLTTTPLRL (235 aa). A helical transmembrane segment spans residues 236-256; that stretch reads LSLLGSVIAIGGFSLSVLLIV. Residues 257–269 are Periplasmic-facing; sequence LRLALGPQWAAEG. A helical membrane pass occupies residues 270–290; the sequence is VFMLFAVLFTFIGAQFIGMGL. Over 291–327 the chain is Cytoplasmic; that stretch reads LGEYIGRIYNDVRARPRYFVQQVIYPESTSFTEESHQ.

This sequence belongs to the glycosyltransferase 2 family.

The protein resides in the cell inner membrane. The catalysed reaction is UDP-4-deoxy-4-formamido-beta-L-arabinose + di-trans,octa-cis-undecaprenyl phosphate = 4-deoxy-4-formamido-alpha-L-arabinopyranosyl di-trans,octa-cis-undecaprenyl phosphate + UDP. Its pathway is glycolipid biosynthesis; 4-amino-4-deoxy-alpha-L-arabinose undecaprenyl phosphate biosynthesis; 4-amino-4-deoxy-alpha-L-arabinose undecaprenyl phosphate from UDP-4-deoxy-4-formamido-beta-L-arabinose and undecaprenyl phosphate: step 1/2. It participates in bacterial outer membrane biogenesis; lipopolysaccharide biosynthesis. Functionally, catalyzes the transfer of 4-deoxy-4-formamido-L-arabinose from UDP to undecaprenyl phosphate. The modified arabinose is attached to lipid A and is required for resistance to polymyxin and cationic antimicrobial peptides. The polypeptide is Undecaprenyl-phosphate 4-deoxy-4-formamido-L-arabinose transferase (Salmonella newport (strain SL254)).